The chain runs to 850 residues: DEAD-box ATP-dependent RNA helicase 26 (850 aa).

2 disordered regions span residues 60–82 and 106–350; these read TRPERSQPEFARRSGAGGEIRAS and GKFT…ENDE. The segment covering 61–71 has biased composition (basic and acidic residues); that stretch reads RPERSQPEFAR. The residue at position 109 (T109) is a Phosphothreonine. S110 carries the post-translational modification Phosphoserine. 2 stretches are compositionally biased toward basic and acidic residues: residues 118–140 and 284–299; these read EVVRRNVDRDTSRGPRRGREGQS and GRNDRNVESGFRREPG. Composition is skewed to acidic residues over residues 315-325 and 336-350; these read LEEEDSSDDDE and LPSEDSSDEDDENDE. Residues 382 to 410 carry the Q motif motif; sequence TRFDQFPLSPLSLKAIKDAGFETMTVVQE. The region spanning 413–596 is the Helicase ATP-binding domain; that stretch reads LPIILQGKDV…HVALKRDHEF (184 aa). 426 to 433 contacts ATP; the sequence is AKTGTGKT. The short motif at 544–547 is the DEAD box element; sequence DEAD. The region spanning 630-777 is the Helicase C-terminal domain; sequence LLKEHIADNV…IDPEAVKRVQ (148 aa).

This sequence belongs to the DEAD box helicase family.

The catalysed reaction is ATP + H2O = ADP + phosphate + H(+). The polypeptide is DEAD-box ATP-dependent RNA helicase 26 (RH26) (Arabidopsis thaliana (Mouse-ear cress)).